Here is a 688-residue protein sequence, read N- to C-terminus: DNA ligase (688 aa).

Residues 42 to 46 (DAEYD), 91 to 92 (SL), and Glu-128 contribute to the NAD(+) site. The active-site N6-AMP-lysine intermediate is Lys-130. Residues Arg-151, Glu-188, Lys-305, and Lys-329 each contribute to the NAD(+) site. Zn(2+) is bound by residues Cys-423, Cys-426, Cys-441, and Cys-447. The 81-residue stretch at 608–688 (APQGVLAGKT…GMRKLLEGQL (81 aa)) folds into the BRCT domain.

It belongs to the NAD-dependent DNA ligase family. LigA subfamily. The cofactor is Mg(2+). Requires Mn(2+) as cofactor.

The catalysed reaction is NAD(+) + (deoxyribonucleotide)n-3'-hydroxyl + 5'-phospho-(deoxyribonucleotide)m = (deoxyribonucleotide)n+m + AMP + beta-nicotinamide D-nucleotide.. In terms of biological role, DNA ligase that catalyzes the formation of phosphodiester linkages between 5'-phosphoryl and 3'-hydroxyl groups in double-stranded DNA using NAD as a coenzyme and as the energy source for the reaction. It is essential for DNA replication and repair of damaged DNA. The chain is DNA ligase from Paraburkholderia xenovorans (strain LB400).